A 947-amino-acid polypeptide reads, in one-letter code: MEFSWGSGQESRRLLLLLLLLSAWEAGNGQLHYSVSEEAKHGTFVGRIAQDLGLELAELVPRLFRVASKGRGGLLEVNLQNGILFVNSRIDREELCRRSAECSIHLEVIVDRPLQVFHVDVEVRDINDNPPVFPATQKNLSIAESRPLDSRFPLEGASDADIGENALLTYRLSPNEYFSLEKPSDDELVKGLGLILRKSLDREEAPEIFLVLTATDGGKPELTGTVQLLITVLDANDNAPAFDRTIYKVRLLENVPNGTLVIKLNASDLDEGLNGDIIYSFSNDISPNVKSKFHIDPITGQIIVKGYIDFEESKSYEIIVEGIDKGQLPLSGHCRVIVEVEDNNDNVPDLEFKSLSLPIREDAPLGTVIALISVSDKDMGVNGLVTCSLTSHVPFKLVSTFKNYYSLVLDSALDRESVSAYELVVTARDGGSPSLWATASVSVEVADVNDNAPAFAQPEYTVFVKENNPPGCHIFTVSAWDADAQENALVSYSLVERRVGERALSSYVSVHAESGKVYALQPLDHEELELLQFQVTARDAGVPPLGSNVTLQVFVLDENDNAPALLAHRAGGTGGAVSELVPWSVGVDHVVAKVRAVDADSGYNAWLSYELQPGTGGARIPFRVGLYTGEISTTRALDETDAPRHRLLVLVKDHGEPALTATATVLVSLVESGQAPKASSRALVGAVGPDAALVDVNVYLIIAICAVSSLLVLTLLLYTALRCSAPPTEGACAPGKPTLVCSSAVGSWSYSQQRRPRVCSGEGPPKTDLMAFSPSLPDSRDREDELQTTEESFAKPRQPNPDWRYSASLRAGMHSSVHLEEAGILRAGPGGPDQQWPTVSSATPEPEAGEVSPPVGAGVNSNSWTFKYGPGNPKQSGPGELPDKFIIPGSPAIISIRQEPANSQIDKSDFITFGKKEETKKKKKKKKGNKTQEKKEKGNSTTDNSDQ.

Positions 1 to 29 (MEFSWGSGQESRRLLLLLLLLSAWEAGNG) are cleaved as a signal peptide. 6 consecutive Cadherin domains span residues 30–133 (QLHY…PPVF), 134–242 (PATQ…APAF), 243–350 (DRTI…VPDL), 351–455 (EFKS…APAF), 456–565 (AQPE…APAL), and 588–678 (DHVV…APKA). Residues 30–697 (QLHYSVSEEA…GPDAALVDVN (668 aa)) are Extracellular-facing. Cys-96 and Cys-102 form a disulfide bridge. Asn-139, Asn-257, and Asn-265 each carry an N-linked (GlcNAc...) asparagine glycan. Residue Asn-548 is glycosylated (N-linked (GlcNAc...) asparagine). A helical membrane pass occupies residues 698–718 (VYLIIAICAVSSLLVLTLLLY). The Cytoplasmic portion of the chain corresponds to 719-947 (TALRCSAPPT…GNSTTDNSDQ (229 aa)). PXXP repeat units lie at residues 734 to 737 (PGKP), 774 to 777 (PSLP), 796 to 799 (PRQP), 829 to 832 (PGGP), 870 to 873 (PGNP), and 888 to 891 (PGSP). Residues 734 to 891 (PGKPTLVCSS…PDKFIIPGSP (158 aa)) are 6 X 4 AA repeats of P-X-X-P. A required for interaction with FYN region spans residues 738 to 947 (TLVCSSAVGS…GNSTTDNSDQ (210 aa)). 2 disordered regions span residues 754-805 (RRPR…DWRY) and 828-853 (GPGGPDQQWPTVSSATPEPEAGEVSP). The segment at 892-947 (AIISIRQEPANSQIDKSDFITFGKKEETKKKKKKKKGNKTQEKKEKGNSTTDNSDQ) is disordered. The span at 906–920 (DKSDFITFGKKEETK) shows a compositional bias: basic and acidic residues.

Forms homodimers in trans (molecules expressed by two different cells). Forms promiscuous heterodimers in cis (at the plasma membrane of the same cell) with other protocadherins. Interacts with FYN.

It localises to the cell membrane. Its function is as follows. Calcium-dependent cell-adhesion protein involved in cells self-recognition and non-self discrimination. Thereby, it is involved in the establishment and maintenance of specific neuronal connections in the brain. The protein is Protocadherin alpha-4 of Pan troglodytes (Chimpanzee).